The chain runs to 411 residues: 6-hydroxytryprostatin B O-methyltransferase (411 aa).

S-adenosyl-L-methionine is bound at residue aspartate 270. The Proton acceptor role is filled by histidine 313.

Belongs to the class I-like SAM-binding methyltransferase superfamily. Cation-independent O-methyltransferase family. Homodimer.

It carries out the reaction 6-hydroxytryprostatin B + S-adenosyl-L-methionine = tryprostatin A + S-adenosyl-L-homocysteine + H(+). Its pathway is alkaloid biosynthesis. 6-hydroxytryprostatin B O-methyltransferase; part of the gene cluster that mediates the biosynthesis of fumitremorgins, indole alkaloids that carry not only intriguing chemical structures, but also interesting biological and pharmacological activities. The biosynthesis of fumitremorgin-type alkaloids begins by condensation of the two amino acids L-tryptophan and L-proline to brevianamide F, catalyzed by the non-ribosomal peptide synthetase ftmPS/ftmA. Brevianamide F is then prenylated by the prenyltransferase ftmPT1/ftmB in the presence of dimethylallyl diphosphate, resulting in the formation of tryprostatin B. The three cytochrome P450 monooxygenases, ftmP450-1/ftmC, ftmP450-2/ftmE and ftmP450-3/FtmG, are responsible for the conversion of tryprostatin B to 6-hydroxytryprostatin B, tryprostatin A to fumitremorgin C and fumitremorgin C to 12,13-dihydroxyfumitremorgin C, respectively. The putative methyltransferase ftmMT/ftmD is expected for the conversion of 6-hydroxytryprostatin B to tryprostatin A. FtmPT2/FtmH catalyzes the prenylation of 12,13-dihydroxyfumitre-morgin C in the presence of dimethylallyl diphosphate, resulting in the formation of fumitremorgin B. Fumitremorgin B is further converted to verruculogen by ftmOx1/ftmF via the insertion of an endoperoxide bond between the two prenyl moieties. Finally, verruculogen is further converted to fumitremorgin A by the verruculogen prenyltransferase ftmPT3. The protein is 6-hydroxytryprostatin B O-methyltransferase of Neosartorya fischeri (strain ATCC 1020 / DSM 3700 / CBS 544.65 / FGSC A1164 / JCM 1740 / NRRL 181 / WB 181) (Aspergillus fischerianus).